We begin with the raw amino-acid sequence, 189 residues long: Ribosomal RNA large subunit methyltransferase E (189 aa).

Residues Gly-45, Phe-47, Asp-64, Asp-82, and Asp-104 each coordinate S-adenosyl-L-methionine. Residue Lys-144 is the Proton acceptor of the active site.

It belongs to the class I-like SAM-binding methyltransferase superfamily. RNA methyltransferase RlmE family.

Its subcellular location is the cytoplasm. It catalyses the reaction uridine(2552) in 23S rRNA + S-adenosyl-L-methionine = 2'-O-methyluridine(2552) in 23S rRNA + S-adenosyl-L-homocysteine + H(+). In terms of biological role, specifically methylates the uridine in position 2552 of 23S rRNA at the 2'-O position of the ribose in the fully assembled 50S ribosomal subunit. In Borreliella afzelii (strain PKo) (Borrelia afzelii), this protein is Ribosomal RNA large subunit methyltransferase E.